The following is a 244-amino-acid chain: tRNA pseudouridine synthase A (244 aa).

Asp52 functions as the Nucleophile in the catalytic mechanism. Tyr111 serves as a coordination point for substrate.

This sequence belongs to the tRNA pseudouridine synthase TruA family. As to quaternary structure, homodimer.

The enzyme catalyses uridine(38/39/40) in tRNA = pseudouridine(38/39/40) in tRNA. In terms of biological role, formation of pseudouridine at positions 38, 39 and 40 in the anticodon stem and loop of transfer RNAs. The protein is tRNA pseudouridine synthase A of Thermosipho melanesiensis (strain DSM 12029 / CIP 104789 / BI429).